A 323-amino-acid polypeptide reads, in one-letter code: Sporulation-delaying protein SdpB (323 aa).

The next 6 membrane-spanning stretches (helical) occupy residues 27 to 49, 70 to 92, 112 to 134, 155 to 177, 219 to 241, and 248 to 270; these read LLGF…SYSA, SINF…IGWR, LTID…VTLL, TVLF…NAAL, IVVI…ISNI, and LVLG…FGLI.

The protein localises to the cell membrane. In terms of biological role, required for the maturation of SdpC to SDP. Not required for SdpC signal peptide cleavage, secretion from the cell or disulfide bond formation. The chain is Sporulation-delaying protein SdpB from Bacillus subtilis (strain 168).